Consider the following 297-residue polypeptide: Phosphatidylserine decarboxylase proenzyme (297 aa).

Residues Asp-90, His-147, and Ser-252 each act as charge relay system; for autoendoproteolytic cleavage activity in the active site. Catalysis depends on Ser-252, which acts as the Schiff-base intermediate with substrate; via pyruvic acid; for decarboxylase activity. Residue Ser-252 is modified to Pyruvic acid (Ser); by autocatalysis.

It belongs to the phosphatidylserine decarboxylase family. PSD-B subfamily. Prokaryotic type I sub-subfamily. As to quaternary structure, heterodimer of a large membrane-associated beta subunit and a small pyruvoyl-containing alpha subunit. The cofactor is pyruvate. In terms of processing, is synthesized initially as an inactive proenzyme. Formation of the active enzyme involves a self-maturation process in which the active site pyruvoyl group is generated from an internal serine residue via an autocatalytic post-translational modification. Two non-identical subunits are generated from the proenzyme in this reaction, and the pyruvate is formed at the N-terminus of the alpha chain, which is derived from the carboxyl end of the proenzyme. The autoendoproteolytic cleavage occurs by a canonical serine protease mechanism, in which the side chain hydroxyl group of the serine supplies its oxygen atom to form the C-terminus of the beta chain, while the remainder of the serine residue undergoes an oxidative deamination to produce ammonia and the pyruvoyl prosthetic group on the alpha chain. During this reaction, the Ser that is part of the protease active site of the proenzyme becomes the pyruvoyl prosthetic group, which constitutes an essential element of the active site of the mature decarboxylase.

It is found in the cell membrane. The catalysed reaction is a 1,2-diacyl-sn-glycero-3-phospho-L-serine + H(+) = a 1,2-diacyl-sn-glycero-3-phosphoethanolamine + CO2. The protein operates within phospholipid metabolism; phosphatidylethanolamine biosynthesis; phosphatidylethanolamine from CDP-diacylglycerol: step 2/2. Catalyzes the formation of phosphatidylethanolamine (PtdEtn) from phosphatidylserine (PtdSer). In Stutzerimonas stutzeri (strain A1501) (Pseudomonas stutzeri), this protein is Phosphatidylserine decarboxylase proenzyme.